Reading from the N-terminus, the 303-residue chain is Ferrochelatase (303 aa).

2 residues coordinate Fe cation: His-185 and Glu-262.

The protein belongs to the ferrochelatase family.

The protein resides in the cytoplasm. It catalyses the reaction heme b + 2 H(+) = protoporphyrin IX + Fe(2+). It participates in porphyrin-containing compound metabolism; protoheme biosynthesis; protoheme from protoporphyrin-IX: step 1/1. In terms of biological role, catalyzes the ferrous insertion into protoporphyrin IX. This Campylobacter jejuni (strain RM1221) protein is Ferrochelatase.